Reading from the N-terminus, the 397-residue chain is Subtilisin-like protease 12 (397 aa).

The N-terminal stretch at 1–19 is a signal peptide; that stretch reads MSIFKLMVIYFTLFWVVNA. Positions 20–116 are excised as a propeptide; the sequence is AQLLDLDSHG…VEPNREMKAA (97 aa). An Inhibitor I9 domain is found at 35 to 115; sequence YIVVMKNGVS…FVEPNREMKA (81 aa). N-linked (GlcNAc...) asparagine glycans are attached at residues asparagine 123, asparagine 136, and asparagine 150. The 273-residue stretch at 125–397 folds into the Peptidase S8 domain; that stretch reads TWGLARISHM…DKLLYNGSGA (273 aa). Residues aspartate 157 and histidine 188 each act as charge relay system in the active site. Residues asparagine 249, asparagine 305, and asparagine 334 are each glycosylated (N-linked (GlcNAc...) asparagine). Residue serine 343 is the Charge relay system of the active site. Asparagine 385 and asparagine 393 each carry an N-linked (GlcNAc...) asparagine glycan.

It belongs to the peptidase S8 family.

The protein localises to the secreted. In terms of biological role, secreted subtilisin-like serine protease with keratinolytic activity that contributes to pathogenicity. The protein is Subtilisin-like protease 12 (SUB12) of Arthroderma gypseum (strain ATCC MYA-4604 / CBS 118893) (Microsporum gypseum).